Here is a 358-residue protein sequence, read N- to C-terminus: UDP-N-acetylglucosamine--N-acetylmuramyl-(pentapeptide) pyrophosphoryl-undecaprenol N-acetylglucosamine transferase (358 aa).

UDP-N-acetyl-alpha-D-glucosamine-binding positions include 12–14 (TAG), Arg165, Ser195, and Gln290.

This sequence belongs to the glycosyltransferase 28 family. MurG subfamily.

The protein resides in the cell membrane. It catalyses the reaction di-trans,octa-cis-undecaprenyl diphospho-N-acetyl-alpha-D-muramoyl-L-alanyl-D-glutamyl-meso-2,6-diaminopimeloyl-D-alanyl-D-alanine + UDP-N-acetyl-alpha-D-glucosamine = di-trans,octa-cis-undecaprenyl diphospho-[N-acetyl-alpha-D-glucosaminyl-(1-&gt;4)]-N-acetyl-alpha-D-muramoyl-L-alanyl-D-glutamyl-meso-2,6-diaminopimeloyl-D-alanyl-D-alanine + UDP + H(+). Its pathway is cell wall biogenesis; peptidoglycan biosynthesis. Cell wall formation. Catalyzes the transfer of a GlcNAc subunit on undecaprenyl-pyrophosphoryl-MurNAc-pentapeptide (lipid intermediate I) to form undecaprenyl-pyrophosphoryl-MurNAc-(pentapeptide)GlcNAc (lipid intermediate II). The protein is UDP-N-acetylglucosamine--N-acetylmuramyl-(pentapeptide) pyrophosphoryl-undecaprenol N-acetylglucosamine transferase of Clostridium tetani (strain Massachusetts / E88).